The primary structure comprises 559 residues: Sulfite reductase [NADPH] hemoprotein beta-component (559 aa).

4 residues coordinate [4Fe-4S] cluster: cysteine 423, cysteine 429, cysteine 468, and cysteine 472. Cysteine 472 provides a ligand contact to siroheme.

The protein belongs to the nitrite and sulfite reductase 4Fe-4S domain family. In terms of assembly, alpha(8)-beta(8). The alpha component is a flavoprotein, the beta component is a hemoprotein. Siroheme is required as a cofactor. It depends on [4Fe-4S] cluster as a cofactor.

The enzyme catalyses hydrogen sulfide + 3 NADP(+) + 3 H2O = sulfite + 3 NADPH + 4 H(+). Its pathway is sulfur metabolism; hydrogen sulfide biosynthesis; hydrogen sulfide from sulfite (NADPH route): step 1/1. Component of the sulfite reductase complex that catalyzes the 6-electron reduction of sulfite to sulfide. This is one of several activities required for the biosynthesis of L-cysteine from sulfate. In Thiocapsa roseopersicina, this protein is Sulfite reductase [NADPH] hemoprotein beta-component.